The following is a 293-amino-acid chain: Elongation factor Ts (293 aa).

Positions 80 to 83 (TDFV) are involved in Mg(2+) ion dislocation from EF-Tu.

The protein belongs to the EF-Ts family.

It is found in the cytoplasm. Functionally, associates with the EF-Tu.GDP complex and induces the exchange of GDP to GTP. It remains bound to the aminoacyl-tRNA.EF-Tu.GTP complex up to the GTP hydrolysis stage on the ribosome. The sequence is that of Elongation factor Ts from Burkholderia lata (strain ATCC 17760 / DSM 23089 / LMG 22485 / NCIMB 9086 / R18194 / 383).